Reading from the N-terminus, the 224-residue chain is Retinoschisin (224 aa).

The N-terminal stretch at 1–23 (MPHKIEGFFLLLLFGYEATLGLS) is a signal peptide. The region spanning 63 to 219 (CPYHKPLGFE…IAIRMELLEC (157 aa)) is the F5/8 type C domain. 2 disulfides stabilise this stretch: Cys-63-Cys-219 and Cys-110-Cys-142.

Homooctamer of 4 homodimers; disulfide-linked. The homooctamer has a flat, cogwheel structure with a diameter of about 14 nm. Two stacked octamers can assemble to form a hexadecamer. In terms of tissue distribution, detected in the eye cup. Detected in retina, in the inner segment of the photoreceptors, the inner nuclear layer, the inner plexiform layer and the ganglion cell layer (at protein level). Restricted to the retina. At the mRNA level, detected only within the photoreceptor cell layer, most prominently within the inner segments of the photoreceptors. Undetectable in the inner plexiform layers and the inner nuclear layer.

Its subcellular location is the secreted. The protein localises to the cell membrane. In terms of biological role, binds negatively charged membrane lipids, such as phosphatidylserine and phosphoinositides. May play a role in cell-cell adhesion processes in the retina, via homomeric interaction between octamers present on the surface of two neighboring cells. Required for normal structure and function of the retina. The sequence is that of Retinoschisin (Rs1) from Mus musculus (Mouse).